Reading from the N-terminus, the 509-residue chain is Transmembrane protein 102 (509 aa).

Residues 1-312 (MASTVWGGAP…VLLATPEPPR (312 aa)) are Extracellular-facing. The segment at 167-236 (PPVPEESDMT…NPETPEPLET (70 aa)) is disordered. The span at 174-204 (DMTHQTHSKESPTDRENSVDPSHDYVPEPEP) shows a compositional bias: basic and acidic residues. A compositionally biased stretch (low complexity) spans 207–224 (SLQKSSSDLSESQSSYKD). A helical membrane pass occupies residues 313–329 (HLLLFDLIPVVTVTGWP). At 330–509 (DTARSHSWAG…GLAGVGGGTH (180 aa)) the chain is on the cytoplasmic side.

As to quaternary structure, interacts with CSF2RB; this interaction occurs preferentially in the absence of CSF2.

Its subcellular location is the cell membrane. Its function is as follows. Selectively involved in CSF2 deprivation-induced apoptosis via a mitochondria-dependent pathway. The chain is Transmembrane protein 102 (Tmem102) from Mus musculus (Mouse).